Reading from the N-terminus, the 494-residue chain is Fumarate hydratase, mitochondrial (494 aa).

The transit peptide at 1-15 (MLRASATRFLSQAKN) directs the protein to the mitochondrion. Substrate contacts are provided by residues 128-130 (SGT), 159-162 (HPND), 169-171 (SSN), and T217. H218 acts as the Proton donor/acceptor in catalysis. Residue S348 is part of the active site. Substrate-binding positions include S349 and 354-356 (KVN).

Belongs to the class-II fumarase/aspartase family. Fumarase subfamily. Homotetramer.

The protein localises to the mitochondrion matrix. The protein resides in the cytoplasm. It is found in the nucleus. The catalysed reaction is (S)-malate = fumarate + H2O. It functions in the pathway carbohydrate metabolism; tricarboxylic acid cycle; (S)-malate from fumarate: step 1/1. Functionally, catalyzes the reversible stereospecific interconversion of fumarate to L-malate. In mitochondrion, catalyzes the hydration of fumarate to L-malate in the tricarboxylic acid (TCA) cycle to facilitate a transition step in the production of energy in the form of NADH. In cytoplasm and nucleus, involved in DNA repair in response to DNA damage: following DNA double-strand breaks (DSBs), translocates from the cytosol to the nucleus and promotes DNA repair by catalyzing the dehydration of L-malate to fumarate. In Rhizopus oryzae (Mucormycosis agent), this protein is Fumarate hydratase, mitochondrial.